The following is a 199-amino-acid chain: Probable GTP-binding protein EngB (199 aa).

The EngB-type G domain occupies 28–199 (DLPEIALAGR…DSWDAILEQV (172 aa)). Residues 36-43 (GRSNVGKS), 63-67 (GKTQL), 81-84 (DVPG), 148-151 (TKAD), and 180-182 (FSS) contribute to the GTP site. Residues Ser-43 and Thr-65 each coordinate Mg(2+).

Belongs to the TRAFAC class TrmE-Era-EngA-EngB-Septin-like GTPase superfamily. EngB GTPase family. Requires Mg(2+) as cofactor.

Its function is as follows. Necessary for normal cell division and for the maintenance of normal septation. This is Probable GTP-binding protein EngB from Streptococcus pyogenes serotype M28 (strain MGAS6180).